We begin with the raw amino-acid sequence, 390 residues long: Putative cyclin-F2-1 (390 aa).

Positions 135 to 154 are disordered; sequence YNGDDDAPAPDDSMASRPQL.

Belongs to the cyclin family. Cyclin F subfamily.

This is Putative cyclin-F2-1 (CycF2-1) from Oryza sativa subsp. japonica (Rice).